A 116-amino-acid chain; its full sequence is Large ribosomal subunit protein uL18 (116 aa).

Belongs to the universal ribosomal protein uL18 family. In terms of assembly, part of the 50S ribosomal subunit; part of the 5S rRNA/L5/L18/L25 subcomplex. Contacts the 5S and 23S rRNAs.

In terms of biological role, this is one of the proteins that bind and probably mediate the attachment of the 5S RNA into the large ribosomal subunit, where it forms part of the central protuberance. In Pseudomonas entomophila (strain L48), this protein is Large ribosomal subunit protein uL18.